A 738-amino-acid polypeptide reads, in one-letter code: Protein Aster-B (738 aa).

The disordered stretch occupies residues 1–81 (MKGFKLSCTA…SGGKNSKKSQ (81 aa)). Residues 8–19 (CTASNSNRSTPA) are compositionally biased toward polar residues. A phosphoserine mark is found at S28 and S30. Residues 41–51 (MVEKGSDHSSD) are compositionally biased toward basic and acidic residues. The segment covering 59-70 (QGVQRSCSSQSG) has biased composition (low complexity). One can recognise a GRAM domain in the interval 96-163 (EDFRKLFKQL…KDICSMTKEK (68 aa)). The disordered stretch occupies residues 254–301 (EENEVNDSSSKSSIETKPDASPQLPKKSITNSTLTSTGSSEAPVSFDG). Positions 259-268 (NDSSSKSSIE) are enriched in polar residues. S274 carries the post-translational modification Phosphoserine. Over residues 281-295 (SITNSTLTSTGSSEA) the composition is skewed to polar residues. Residues 372 to 543 (SGRQYVNEVF…ELAKTESTYL (172 aa)) form the VASt domain. A Phosphotyrosine modification is found at Y389. The segment at 544 to 566 (AEMHRQSPKEKASKTTTVRRRKR) is disordered. Residues 545–556 (EMHRQSPKEKAS) are compositionally biased toward basic and acidic residues. Phosphoserine occurs at positions 550 and 581. A phosphothreonine mark is found at T584, T585, and T587. Residues 623–643 (LLLVISCVICFSLVLLVILNM) form a helical membrane-spanning segment.

It is found in the endoplasmic reticulum membrane. Its subcellular location is the cell membrane. Cholesterol transporter that mediates non-vesicular transport of cholesterol from the plasma membrane (PM) to the endoplasmic reticulum (ER). Contains unique domains for binding cholesterol and the PM, thereby serving as a molecular bridge for the transfer of cholesterol from the PM to the ER. Plays a crucial role in cholesterol homeostasis in the adrenal gland and has the unique ability to localize to the PM based on the level of membrane cholesterol. In lipid-poor conditions localizes to the ER membrane and in response to excess cholesterol in the PM is recruited to the endoplasmic reticulum-plasma membrane contact sites (EPCS) which is mediated by the GRAM domain. At the EPCS, the sterol-binding VASt/ASTER domain binds to the cholesterol in the PM and facilitates its transfer from the PM to ER. This is Protein Aster-B (GRAMD1B) from Homo sapiens (Human).